Here is a 243-residue protein sequence, read N- to C-terminus: Phosphoadenosine 5'-phosphosulfate reductase (243 aa).

Cys-239 (nucleophile; cysteine thiosulfonate intermediate) is an active-site residue.

The protein belongs to the PAPS reductase family. CysH subfamily.

It is found in the cytoplasm. It catalyses the reaction [thioredoxin]-disulfide + sulfite + adenosine 3',5'-bisphosphate + 2 H(+) = [thioredoxin]-dithiol + 3'-phosphoadenylyl sulfate. Its pathway is sulfur metabolism; hydrogen sulfide biosynthesis; sulfite from sulfate: step 3/3. Catalyzes the formation of sulfite from phosphoadenosine 5'-phosphosulfate (PAPS) using thioredoxin as an electron donor. The sequence is that of Phosphoadenosine 5'-phosphosulfate reductase from Proteus mirabilis (strain HI4320).